The chain runs to 188 residues: Large ribosomal subunit protein eL18 (188 aa).

Residue lysine 119 forms a Glycyl lysine isopeptide (Lys-Gly) (interchain with G-Cter in SUMO2) linkage. Residue serine 130 is modified to Phosphoserine. The segment at arginine 150 to asparagine 188 is disordered. Threonine 158 is modified (phosphothreonine). 2 stretches are compositionally biased toward basic residues: residues serine 161–glycine 171 and arginine 178–asparagine 188. Lysine 164 is covalently cross-linked (Glycyl lysine isopeptide (Lys-Gly) (interchain with G-Cter in SUMO2)).

The protein belongs to the eukaryotic ribosomal protein eL18 family. Component of the large ribosomal subunit.

It localises to the cytoplasm. It is found in the cytosol. The protein resides in the rough endoplasmic reticulum. Component of the large ribosomal subunit. The ribosome is a large ribonucleoprotein complex responsible for the synthesis of proteins in the cell. In Mus musculus (Mouse), this protein is Large ribosomal subunit protein eL18 (Rpl18).